The primary structure comprises 274 residues: MLFALPFPAIDPVLVEIGPFAIRWYALAYIVGLLGGWWYTRFLSRRSRPPVMSDADVDDLLVWATLGTILGGRLGYVVFYNAAHFLANPLEIPMLWHGGMSFHGGLVGVITATVLFCRSRRLSVARVGDLVALVAPLGLFFGRLANFINGELFGRPAPDVPWAMVFPHGGPLPRHPSQLYEATLEGLVLFCLLGLLWRFTALSRKPGQIIGLFLIGYGLSRITAEFFREPDAQIGFLALGVTMGQILSLPMILAGIVVFVVARRAKPLAVPGGR.

A run of 4 helical transmembrane segments spans residues 24–44, 60–80, 96–116, and 122–142; these read WYALAYIVGLLGGWWYTRFLS, LLVWATLGTILGGRLGYVVFY, WHGGMSFHGGLVGVITATVLF, and LSVARVGDLVALVAPLGLFFG. An a 1,2-diacyl-sn-glycero-3-phospho-(1'-sn-glycerol)-binding site is contributed by arginine 143. The next 3 helical transmembrane spans lie at 182–202, 207–227, and 241–261; these read ATLEGLVLFCLLGLLWRFTAL, GQIIGLFLIGYGLSRITAEFF, and VTMGQILSLPMILAGIVVFVV.

It belongs to the Lgt family.

The protein resides in the cell inner membrane. The catalysed reaction is L-cysteinyl-[prolipoprotein] + a 1,2-diacyl-sn-glycero-3-phospho-(1'-sn-glycerol) = an S-1,2-diacyl-sn-glyceryl-L-cysteinyl-[prolipoprotein] + sn-glycerol 1-phosphate + H(+). Its pathway is protein modification; lipoprotein biosynthesis (diacylglyceryl transfer). Catalyzes the transfer of the diacylglyceryl group from phosphatidylglycerol to the sulfhydryl group of the N-terminal cysteine of a prolipoprotein, the first step in the formation of mature lipoproteins. The protein is Phosphatidylglycerol--prolipoprotein diacylglyceryl transferase of Rhodospirillum rubrum (strain ATCC 11170 / ATH 1.1.1 / DSM 467 / LMG 4362 / NCIMB 8255 / S1).